A 515-amino-acid chain; its full sequence is Peroxisomal catalase A (515 aa).

At Ser2 the chain carries N-acetylserine. Active-site residues include His70 and Asn143. Tyr355 contacts heme. The short motif at 513–515 is the Microbody targeting signal element; that stretch reads SKF.

This sequence belongs to the catalase family. As to quaternary structure, homotetramer. It depends on heme as a cofactor.

It localises to the peroxisome matrix. The catalysed reaction is 2 H2O2 = O2 + 2 H2O. Functionally, catalyzes the degradation of hydrogen peroxide (H(2)O(2)) generated by peroxisomal oxidases to water and oxygen, thereby protecting cells from the toxic effects of hydrogen peroxide. The protein is Peroxisomal catalase A (CTA1) of Saccharomyces cerevisiae (strain ATCC 204508 / S288c) (Baker's yeast).